Here is a 171-residue protein sequence, read N- to C-terminus: Galectin-related protein (171 aa).

In terms of domain architecture, Galectin spans 38–170 (PFCGHIKGGM…INGDLQLTKL (133 aa)).

Functionally, does not bind lactose, and may not bind carbohydrates. The protein is Galectin-related protein (lgalsl) of Xenopus tropicalis (Western clawed frog).